We begin with the raw amino-acid sequence, 88 residues long: uncharacterized protein (88 aa).

It is found in the host cytoplasm. This is an uncharacterized protein from Escherichia phage Mu (Bacteriophage Mu).